Here is a 290-residue protein sequence, read N- to C-terminus: Ribosomal RNA small subunit methyltransferase A (290 aa).

S-adenosyl-L-methionine-binding residues include N27, L29, G54, E75, D100, and N125.

This sequence belongs to the class I-like SAM-binding methyltransferase superfamily. rRNA adenine N(6)-methyltransferase family. RsmA subfamily.

It is found in the cytoplasm. The catalysed reaction is adenosine(1518)/adenosine(1519) in 16S rRNA + 4 S-adenosyl-L-methionine = N(6)-dimethyladenosine(1518)/N(6)-dimethyladenosine(1519) in 16S rRNA + 4 S-adenosyl-L-homocysteine + 4 H(+). Its function is as follows. Specifically dimethylates two adjacent adenosines (A1518 and A1519) in the loop of a conserved hairpin near the 3'-end of 16S rRNA in the 30S particle. May play a critical role in biogenesis of 30S subunits. In Streptococcus pyogenes serotype M5 (strain Manfredo), this protein is Ribosomal RNA small subunit methyltransferase A.